The primary structure comprises 417 residues: UDP-N-acetylglucosamine 1-carboxyvinyltransferase (417 aa).

23–24 (KN) contributes to the phosphoenolpyruvate binding site. Arginine 93 serves as a coordination point for UDP-N-acetyl-alpha-D-glucosamine. The active-site Proton donor is aspartate 117. Aspartate 305 and valine 327 together coordinate UDP-N-acetyl-alpha-D-glucosamine.

It belongs to the EPSP synthase family. MurA subfamily.

Its subcellular location is the cytoplasm. It catalyses the reaction phosphoenolpyruvate + UDP-N-acetyl-alpha-D-glucosamine = UDP-N-acetyl-3-O-(1-carboxyvinyl)-alpha-D-glucosamine + phosphate. The protein operates within cell wall biogenesis; peptidoglycan biosynthesis. Functionally, cell wall formation. Adds enolpyruvyl to UDP-N-acetylglucosamine. The protein is UDP-N-acetylglucosamine 1-carboxyvinyltransferase of Mycolicibacterium paratuberculosis (strain ATCC BAA-968 / K-10) (Mycobacterium paratuberculosis).